Reading from the N-terminus, the 255-residue chain is Type III pantothenate kinase (255 aa).

Position 6 to 13 (Asp-6 to Val-13) interacts with ATP. Residues Tyr-100 and Gly-107–Arg-110 contribute to the substrate site. Asp-109 serves as the catalytic Proton acceptor. Residue Asp-129 participates in K(+) binding. Residue Thr-132 coordinates ATP. Residue Thr-184 coordinates substrate.

This sequence belongs to the type III pantothenate kinase family. As to quaternary structure, homodimer. The cofactor is NH4(+). Requires K(+) as cofactor.

It localises to the cytoplasm. It catalyses the reaction (R)-pantothenate + ATP = (R)-4'-phosphopantothenate + ADP + H(+). It participates in cofactor biosynthesis; coenzyme A biosynthesis; CoA from (R)-pantothenate: step 1/5. In terms of biological role, catalyzes the phosphorylation of pantothenate (Pan), the first step in CoA biosynthesis. The sequence is that of Type III pantothenate kinase from Syntrophomonas wolfei subsp. wolfei (strain DSM 2245B / Goettingen).